The primary structure comprises 226 residues: PKHD-type hydroxylase PputW619_4316 (226 aa).

The 101-residue stretch at 78–178 (KVFPPLINCY…RYAAFFWTQS (101 aa)) folds into the Fe2OG dioxygenase domain. Fe cation contacts are provided by His-96, Asp-98, and His-159. Arg-169 contacts 2-oxoglutarate.

It depends on Fe(2+) as a cofactor. L-ascorbate serves as cofactor.

The sequence is that of PKHD-type hydroxylase PputW619_4316 from Pseudomonas putida (strain W619).